Consider the following 298-residue polypeptide: Ketohexokinase (298 aa).

Asp-15, Gly-41, Asn-42, and Asn-45 together coordinate beta-D-fructose. Residues Arg-108, 226 to 229 (AEEG), and 255 to 258 (GAGD) contribute to the ATP site. Residue Asp-258 coordinates beta-D-fructose.

Belongs to the carbohydrate kinase PfkB family. Homodimer.

The enzyme catalyses beta-D-fructose + ATP = beta-D-fructose 1-phosphate + ADP + H(+). The protein operates within carbohydrate metabolism; fructose metabolism. With respect to regulation, requires potassium. Inhibition by ADP. Catalyzes the phosphorylation of the ketose sugar fructose to fructose-1-phosphate. In Mus musculus (Mouse), this protein is Ketohexokinase.